Consider the following 341-residue polypeptide: Methionine import ATP-binding protein MetN (341 aa).

One can recognise an ABC transporter domain in the interval 9-247; that stretch reads ISVQDVSKKL…SENSITNELF (239 aa). 41-48 contributes to the ATP binding site; the sequence is GHSGSGKT.

This sequence belongs to the ABC transporter superfamily. Methionine importer (TC 3.A.1.24) family. As to quaternary structure, the complex is composed of two ATP-binding proteins (MetN), two transmembrane proteins (MetI) and a solute-binding protein (MetQ).

The protein resides in the cell inner membrane. It carries out the reaction L-methionine(out) + ATP + H2O = L-methionine(in) + ADP + phosphate + H(+). It catalyses the reaction D-methionine(out) + ATP + H2O = D-methionine(in) + ADP + phosphate + H(+). Part of the ABC transporter complex MetNIQ involved in methionine import. Responsible for energy coupling to the transport system. In Chlamydia pneumoniae (Chlamydophila pneumoniae), this protein is Methionine import ATP-binding protein MetN.